The following is a 728-amino-acid chain: 1,4-alpha-glucan branching enzyme GlgB (728 aa).

Residue D405 is the Nucleophile of the active site. The Proton donor role is filled by E458.

It belongs to the glycosyl hydrolase 13 family. GlgB subfamily. Monomer.

It carries out the reaction Transfers a segment of a (1-&gt;4)-alpha-D-glucan chain to a primary hydroxy group in a similar glucan chain.. It participates in glycan biosynthesis; glycogen biosynthesis. In terms of biological role, catalyzes the formation of the alpha-1,6-glucosidic linkages in glycogen by scission of a 1,4-alpha-linked oligosaccharide from growing alpha-1,4-glucan chains and the subsequent attachment of the oligosaccharide to the alpha-1,6 position. The protein is 1,4-alpha-glucan branching enzyme GlgB of Escherichia coli O1:K1 / APEC.